A 124-amino-acid chain; its full sequence is U33-theraphotoxin-Cg1c (124 aa).

Positions 1–17 (MKFAVAIAFTLLVCVFA) are cleaved as a signal peptide. 5 disulfide bridges follow: Cys26–Cys37, Cys31–Cys51, Cys36–Cys75, Cys61–Cys83, and Cys77–Cys94. A compositionally biased stretch (basic and acidic residues) spans 93-108 (RCQEESGKSDKSKESQ). The interval 93 to 124 (RCQEESGKSDKSKESQGSDESEESEESKESSG) is disordered. Over residues 109 to 118 (GSDESEESEE) the composition is skewed to acidic residues.

It belongs to the neurotoxin 32 family. As to expression, expressed by the venom gland.

The protein localises to the secreted. This Chilobrachys guangxiensis (Chinese earth tiger tarantula) protein is U33-theraphotoxin-Cg1c.